The following is a 689-amino-acid chain: MTSTSKLDANQLARQRKKLEKDRRKKVYDDQQVQGTNNSSIVSKRSVEKLYTQVLQPELGEWFQYFVPKGKRRSPAINRGYWIRMESIRQMVIRIIKANSPNVRINVVNLGCGFDPLAFQLLSLFKNQYNLNFIDIDYPDLVKNKYNMIQQSDEIKQLIGDQGSKSSDLYVMETDNYQLVGCDLKNLAYYKEILPKLVSRNVDPHPTSINIFIAEVSLAYMKPQFANPVIEISSQVNNSHFLILEQIMPDGATNAFATKMLYHFQHLRSPIQCVETYPTEKLQLQRFKRYYKHAEIKNLYGNWKFLIDYQMQKNISTIEEFDEWEEFIIFCQHYVIVHATHMDQLIYDDESSEEQKNEKAFSEMSLDSSVAISHDDRFNDEQLQLKFPAIASFKDKIYVNGGLKQTRNDENLEIDLQTGVITKLDQTENLPTARMCHTLTNLGENLVLIGGRSRPGVFFKDVYMFDTAKKWTRLADLPVGRSRHATVKISDHEVLIFGGLDASSSTTGDELFLLCNTNTNSYTPVKPIGDNDNHPIKNLQSACMIFDGKQGYIFGGMEDINVPIVNSKLYRFELVGENNISVTKVFDHSLLKRIGSKAHILENGDKLLIVGGVSPDQLFTKSTNIVTLDLNIFTFKSVEIPNVISEKVPPIFVGFELVQINNKASYIISGGAVCYSFGSCYNSVYKLEY.

Positions 1-33 (MTSTSKLDANQLARQRKKLEKDRRKKVYDDQQV) are disordered. A compositionally biased stretch (basic residues) spans 14–26 (RQRKKLEKDRRKK). S-adenosyl-L-methionine-binding positions include Arg84, Gly111, Asp137, 183-184 (DL), and Glu215.

Belongs to the methyltransferase superfamily. LCMT family.

The enzyme catalyses 7-[(3S)-3-amino-3-carboxypropyl]wyosine(37) in tRNA(Phe) + S-adenosyl-L-methionine = 7-[(3S)-(3-amino-3-methoxycarbonyl)propyl]wyosine(37) in tRNA(Phe) + S-adenosyl-L-homocysteine. It carries out the reaction 7-[(3S)-(3-amino-3-methoxycarbonyl)propyl]wyosine(37) in tRNA(Phe) + S-adenosyl-L-methionine + CO2 = wybutosine(37) in tRNA(Phe) + S-adenosyl-L-homocysteine + 2 H(+). The protein operates within tRNA modification; wybutosine-tRNA(Phe) biosynthesis. Functionally, probable S-adenosyl-L-methionine-dependent methyltransferase that acts as a component of the wybutosine biosynthesis pathway. Wybutosine is a hyper modified guanosine with a tricyclic base found at the 3'-position adjacent to the anticodon of eukaryotic phenylalanine tRNA. May methylate the carboxyl group of leucine residues to form alpha-leucine ester residues. The sequence is that of tRNA wybutosine-synthesizing protein 4 (PPM2) from Candida albicans (strain SC5314 / ATCC MYA-2876) (Yeast).